We begin with the raw amino-acid sequence, 396 residues long: Squamosa promoter-binding-like protein 10 (396 aa).

Positions 74-104 are disordered; it reads QSTSINSSSPEDKRCNLASQSSPGDSSSNID. Polar residues predominate over residues 90-104; it reads LASQSSPGDSSSNID. The SBP-type zinc finger occupies 173–250; sequence VPRCQIDGCE…SHHNARRRKP (78 aa). Residues cysteine 176, cysteine 181, cysteine 198, histidine 201, cysteine 217, cysteine 220, histidine 224, and cysteine 236 each coordinate Zn(2+). A Bipartite nuclear localization signal motif is present at residues 233 to 249; that stretch reads KRSCRKRLSHHNARRRK.

Requires Zn(2+) as cofactor.

The protein localises to the nucleus. In terms of biological role, trans-acting factor that binds specifically to the consensus nucleotide sequence 5'-TNCGTACAA-3'. The polypeptide is Squamosa promoter-binding-like protein 10 (SPL10) (Arabidopsis thaliana (Mouse-ear cress)).